The chain runs to 150 residues: Large ribosomal subunit protein bL9 (150 aa).

The protein belongs to the bacterial ribosomal protein bL9 family.

Functionally, binds to the 23S rRNA. This Streptococcus agalactiae serotype Ia (strain ATCC 27591 / A909 / CDC SS700) protein is Large ribosomal subunit protein bL9.